The primary structure comprises 309 residues: Protease HtpX homolog (309 aa).

Transmembrane regions (helical) follow at residues 15 to 35 (NAVLTTYCVIFAFIGLLVDVI) and 54 to 74 (IFPTITVIMFLVAFVVIVVCI). Residue His-165 participates in Zn(2+) binding. Residue Glu-166 is part of the active site. A Zn(2+)-binding site is contributed by His-169. 2 helical membrane-spanning segments follow: residues 181–201 (VGILSNIMLLVANFSVYFFMG) and 213–233 (MILLVLQIVLPFLTLILQMYL). Position 238 (Glu-238) interacts with Zn(2+).

Belongs to the peptidase M48B family. Zn(2+) is required as a cofactor.

Its subcellular location is the cell inner membrane. This is Protease HtpX homolog from Helicobacter acinonychis (strain Sheeba).